Reading from the N-terminus, the 456-residue chain is UDP-N-acetylmuramoylalanine--D-glutamate ligase (456 aa).

113–119 (GTNGKTT) is an ATP binding site.

This sequence belongs to the MurCDEF family.

It is found in the cytoplasm. The enzyme catalyses UDP-N-acetyl-alpha-D-muramoyl-L-alanine + D-glutamate + ATP = UDP-N-acetyl-alpha-D-muramoyl-L-alanyl-D-glutamate + ADP + phosphate + H(+). Its pathway is cell wall biogenesis; peptidoglycan biosynthesis. Its function is as follows. Cell wall formation. Catalyzes the addition of glutamate to the nucleotide precursor UDP-N-acetylmuramoyl-L-alanine (UMA). In Crocosphaera subtropica (strain ATCC 51142 / BH68) (Cyanothece sp. (strain ATCC 51142)), this protein is UDP-N-acetylmuramoylalanine--D-glutamate ligase.